The sequence spans 257 residues: 1-(5-phosphoribosyl)-5-[(5-phosphoribosylamino)methylideneamino] imidazole-4-carboxamide isomerase (257 aa).

Asp8 serves as the catalytic Proton acceptor. The Proton donor role is filled by Asp129.

It belongs to the HisA/HisF family.

The protein localises to the cytoplasm. It catalyses the reaction 1-(5-phospho-beta-D-ribosyl)-5-[(5-phospho-beta-D-ribosylamino)methylideneamino]imidazole-4-carboxamide = 5-[(5-phospho-1-deoxy-D-ribulos-1-ylimino)methylamino]-1-(5-phospho-beta-D-ribosyl)imidazole-4-carboxamide. Its pathway is amino-acid biosynthesis; L-histidine biosynthesis; L-histidine from 5-phospho-alpha-D-ribose 1-diphosphate: step 4/9. In Trichodesmium erythraeum (strain IMS101), this protein is 1-(5-phosphoribosyl)-5-[(5-phosphoribosylamino)methylideneamino] imidazole-4-carboxamide isomerase.